The chain runs to 167 residues: Peptide deformylase (167 aa).

2 residues coordinate Fe cation: Cys91 and His133. Glu134 is a catalytic residue. Residue His137 coordinates Fe cation.

This sequence belongs to the polypeptide deformylase family. The cofactor is Fe(2+).

The catalysed reaction is N-terminal N-formyl-L-methionyl-[peptide] + H2O = N-terminal L-methionyl-[peptide] + formate. Removes the formyl group from the N-terminal Met of newly synthesized proteins. Requires at least a dipeptide for an efficient rate of reaction. N-terminal L-methionine is a prerequisite for activity but the enzyme has broad specificity at other positions. The sequence is that of Peptide deformylase from Tolumonas auensis (strain DSM 9187 / NBRC 110442 / TA 4).